Consider the following 741-residue polypeptide: MLKKIITALGMSGMLLASSNAIAEDTKTKNDNLSPQSVDLSPLRNLNKLDSPMDKDYNYHQAFKKLDTEQLKKDMQDLLTQSQDWWPADFGNYGPFFIRLSWHDAGTYRIYDGRGGANRGQQRFSPLNSWPDNVNLDKARQLLWPIKQKYGDAVSWSDLIVLAGTVSLESMGMKPIGFAFGREDDWQGDDTNWGLSPEEIMSSNVRDGKLAPAYAATQMGLIYVNPEGPDGKPDIKGAASEIRQAFRAMGMTDKETVALIAGGHTFGKTHGAVPEDKVKQAIGPAPDKAPIEQQGLGWHNSYGTGNGDDTMGSGLEGSWTSTPTFWNHDFLHNLYNLDWKKTLSPAGAHQWTPTNAKPENMVPDAHKLGVKHKPIMFTTDLALKEDDGFNKYTQEFYNNPEEFKEEFAKAWFKLTHRDMGPKSRYIGPWIPEQNFIWQDPVPAADYKQVSTQDIAQLEQDIINSGLTNQQLIKTAWDSASTYRKTDYRGGSNGARIALAPEKDWQMNEPAKLEVVLTKLKEIQTNFNNSKTDGTKVSLADLIVLGGNVGVEQAAKQAGYNIQMPFVPGRTDATQAQTDIESFNYLKTKSDGFINYTDGSISADKLPQTLVEKASMLDLNIPEMTVLVGGMRALDVNYDNSQEGVLTTTPGQLNNSFFVNLLDMSTQWKKSDKKDGEYIGIDRKTGKQKWTASPVDLIFGSNSELKAVAQVYAENGNEQKFVNDFAKAWHKVMMLGRFDVQQ.

The N-terminal stretch at 1–23 is a signal peptide; sequence MLKKIITALGMSGMLLASSNAIA. Positions 102–223 form a cross-link, tryptophyl-tyrosyl-methioninium (Trp-Tyr) (with M-249); the sequence is WHDAGTYRIY…YAATQMGLIY (122 aa). The active-site Proton acceptor is the H103. Residues 223–249 constitute a cross-link (tryptophyl-tyrosyl-methioninium (Tyr-Met) (with W-102)); it reads YVNPEGPDGKPDIKGAASEIRQAFRAM. Residue H264 coordinates heme b.

It belongs to the peroxidase family. Peroxidase/catalase subfamily. In terms of assembly, homodimer or homotetramer. Requires heme b as cofactor. Post-translationally, formation of the three residue Trp-Tyr-Met cross-link is important for the catalase, but not the peroxidase activity of the enzyme.

It carries out the reaction H2O2 + AH2 = A + 2 H2O. The catalysed reaction is 2 H2O2 = O2 + 2 H2O. Functionally, bifunctional enzyme with both catalase and broad-spectrum peroxidase activity. This is Catalase-peroxidase from Francisella tularensis subsp. holarctica (strain FTNF002-00 / FTA).